Here is a 280-residue protein sequence, read N- to C-terminus: Pantothenate synthetase (280 aa).

Methionine 32–histidine 39 serves as a coordination point for ATP. Histidine 39 functions as the Proton donor in the catalytic mechanism. Glutamine 63 provides a ligand contact to (R)-pantoate. Residue glutamine 63 participates in beta-alanine binding. Glycine 149–aspartate 152 lines the ATP pocket. Glutamine 155 provides a ligand contact to (R)-pantoate. Residues valine 178 and methionine 186–arginine 189 contribute to the ATP site.

Belongs to the pantothenate synthetase family. As to quaternary structure, homodimer.

It is found in the cytoplasm. The enzyme catalyses (R)-pantoate + beta-alanine + ATP = (R)-pantothenate + AMP + diphosphate + H(+). It participates in cofactor biosynthesis; (R)-pantothenate biosynthesis; (R)-pantothenate from (R)-pantoate and beta-alanine: step 1/1. Catalyzes the condensation of pantoate with beta-alanine in an ATP-dependent reaction via a pantoyl-adenylate intermediate. The chain is Pantothenate synthetase from Ruegeria sp. (strain TM1040) (Silicibacter sp.).